We begin with the raw amino-acid sequence, 244 residues long: Ribonuclease 3 (244 aa).

The RNase III domain maps to 17-146; that stretch reads FEKKMQELNL…FVGALYLDQG (130 aa). Glutamate 59 is a binding site for Mg(2+). Residue aspartate 63 is part of the active site. Residues aspartate 132 and glutamate 135 each coordinate Mg(2+). Glutamate 135 is a catalytic residue. The 70-residue stretch at 172–241 folds into the DRBM domain; the sequence is DFKTQFQEYV…AERAYKILKN (70 aa).

Belongs to the ribonuclease III family. In terms of assembly, homodimer. Mg(2+) is required as a cofactor.

It is found in the cytoplasm. It carries out the reaction Endonucleolytic cleavage to 5'-phosphomonoester.. Digests double-stranded RNA. Involved in the processing of primary rRNA transcript to yield the immediate precursors to the large and small rRNAs (23S and 16S). Processes some mRNAs, and tRNAs when they are encoded in the rRNA operon. Processes pre-crRNA and tracrRNA of type II CRISPR loci if present in the organism. The polypeptide is Ribonuclease 3 (Staphylococcus saprophyticus subsp. saprophyticus (strain ATCC 15305 / DSM 20229 / NCIMB 8711 / NCTC 7292 / S-41)).